Here is a 410-residue protein sequence, read N- to C-terminus: MTLLKNKKQLLEKQYIKKNTKKFNQVILALFSGGFATFSILYCVQSILPMFSKQFYLTPAESSLALSAATITMSLGMLFTGPLSDIIGRKSIMSTSLFIAAMLTMICSMMTSWISIVLLRALTGLALSGVVAVAMTYISEEIHPNSLSFCMGLYISGNTIGGFLGRLLSSILAEKFSWSISLMVIGLFSFISSCFFLYFLPPSKNFLSVSINFHKCLHRFYLQLKNRVLFFLFIIGFILMGSFVTIFNYIGYRLMLEPFFLCQSSIGLLSTIYLTGVYSSPKAGVLINKYNRNNILIVSLMLMIIGLFITQYNQLFIIILGLIIFSGGFFASHSTASSWVGSYSNIAKIQATSLYLFFYYLGSSVFGTFGGFFWFHMQWLGISVFIITMLFFGVFLSFKLKQKNFKNKYF.

12 helical membrane-spanning segments follow: residues 27-47 (ILAL…VQSI), 63-83 (SLAL…TGPL), 97-117 (LFIA…ISIV), 118-138 (LLRA…MTYI), 145-165 (NSLS…GFLG), 180-200 (ISLM…LYFL), 228-248 (VLFF…TIFN), 254-274 (LMLE…TIYL), 293-313 (NNIL…TQYN), 316-332 (FIII…FFAS), 355-375 (YLFF…FFWF), and 378-398 (QWLG…FLSF).

It belongs to the major facilitator superfamily.

The protein localises to the cell membrane. This is an uncharacterized protein from Buchnera aphidicola subsp. Acyrthosiphon pisum (strain APS) (Acyrthosiphon pisum symbiotic bacterium).